A 33-amino-acid chain; its full sequence is RWKVFKKIEKMGRNIRDGVIKAAPAIEVLGQAK.

Position 21 is a 5-hydroxylysine (Lys-21).

As to quaternary structure, monomer. Hemolymph.

The protein localises to the secreted. Its function is as follows. Cecropins have lytic and antibacterial activity against several Gram-positive and Gram-negative bacteria. Also has activity against fungi. The sequence is that of Cecropin-C from Heliothis virescens (Tobacco budworm moth).